The chain runs to 363 residues: Aminomethyltransferase (363 aa).

Belongs to the GcvT family. In terms of assembly, the glycine cleavage system is composed of four proteins: P, T, L and H.

The catalysed reaction is N(6)-[(R)-S(8)-aminomethyldihydrolipoyl]-L-lysyl-[protein] + (6S)-5,6,7,8-tetrahydrofolate = N(6)-[(R)-dihydrolipoyl]-L-lysyl-[protein] + (6R)-5,10-methylene-5,6,7,8-tetrahydrofolate + NH4(+). In terms of biological role, the glycine cleavage system catalyzes the degradation of glycine. The polypeptide is Aminomethyltransferase (Staphylococcus aureus (strain bovine RF122 / ET3-1)).